The primary structure comprises 706 residues: Coiled-coil domain-containing protein 177 (706 aa).

Acidic residues predominate over residues 1 to 11 (MVDPVPEEEKE). Disordered stretches follow at residues 1-63 (MVDP…GGRR), 179-262 (ASAL…LREL), and 268-287 (ASARNSCPAGSASSAPNPLG). 2 stretches are compositionally biased toward low complexity: residues 28–49 (PPDAQGAQQPAASSASASAAAP) and 179–209 (ASALSGGSSSSCSSSSSLPASPASRVARRTS). The segment covering 210 to 221 (PSPPARSRPPPA) has biased composition (pro residues). Positions 242–257 (ALSSESGASSSSYSGE) are enriched in low complexity. The residue at position 310 (Ser310) is a Phosphoserine. Residues 360 to 624 (AAHGQWEQQR…QTRLEKERAQ (265 aa)) are a coiled coil. Disordered regions lie at residues 364–386 (QWEQQRVRAEQRREREEREKQRA), 398–425 (VEERRGRRGREEREAARRRQQQCERSEE), 448–580 (DDRL…EREH), and 651–706 (ERSE…LDRK). Basic and acidic residues predominate over residues 368–386 (QRVRAEQRREREEREKQRA). Basic and acidic residues-rich tracts occupy residues 448–529 (DDRL…REGL), 548–580 (QEQRARELRERARREELQGRRAKEAAERKEREH), and 651–663 (ERSEQLSRERRSA). Residues 664 to 674 (LESARSTARAS) show a composition bias toward low complexity. Positions 676–706 (HVREKVREETNTRSFDRMVREAQLHASLDRK) are enriched in basic and acidic residues.

The chain is Coiled-coil domain-containing protein 177 (Ccdc177) from Mus musculus (Mouse).